The sequence spans 226 residues: Beta-casein (226 aa).

The first 15 residues, 1–15 (MKVLILACLVALALA), serve as a signal peptide directing secretion. At Thr-18 the chain carries Phosphothreonine; in form 5-P. Residue Ser-21 is modified to Phosphoserine; in form 4-P and form 5-P. At Ser-23 the chain carries Phosphoserine; in form 3-P, form 4-P and form 5-P. Phosphoserine; in form 1-P, form 2-P, form 3-P, form 4-P and form 5-P occurs at positions 24 and 25.

It belongs to the beta-casein family. In terms of processing, form 1-P is phosphorylated once; half of the molecules are phosphorylated on Ser-24, half on Ser-25. In terms of tissue distribution, mammary gland specific. Secreted in milk.

The protein resides in the secreted. Functionally, important role in determination of the surface properties of the casein micelles. The sequence is that of Beta-casein (CSN2) from Homo sapiens (Human).